A 215-amino-acid chain; its full sequence is Sodium channel regulatory subunit beta-3 (215 aa).

The N-terminal stretch at 1 to 24 (MPAFNRLLPLASLVLIYWVRVCFP) is a signal peptide. An Ig-like C2-type domain is found at 25-138 (VCVEVPSETE…EAHRPFVKTT (114 aa)). Residues 25 to 156 (VCVEVPSETE…EEAGEDFTSV (132 aa)) lie on the Extracellular side of the membrane. 2 cysteine pairs are disulfide-bonded: C26–C48 and C45–C120. N-linked (GlcNAc...) asparagine glycans are attached at residues N95, N109, N113, and N121. Residues 157-178 (VSEIMMYILLVFLTLWLFIEMI) traverse the membrane as a helical segment. Residues 179–215 (YCYRKVSKAEEAAQENASDYLAIPSENKENSVVPVEE) lie on the Cytoplasmic side of the membrane.

It belongs to the sodium channel auxiliary subunit SCN3B (TC 8.A.17) family. A voltage-gated sodium (Nav) channel consists of an ion-conducting pore-forming alpha subunit functional on its own that is regulated by one or more beta subunits. Forms homodimers and homotrimers. SCN3B is non-covalently associated with alpha subunits and induces the formation of alpha subunit oligomers, including trimers. Interacts with SCN5A/Nav1.5; regulatory subunit of SCN5A/Nav1.5. Interacts with SCN7A/Nav2.1; probable regulatory subunit of SCN7A/Nav2.1. Interacts with SCN10A; regulatory subunit of SCN10A/Nav1.8. Interacts with NFASC; probably involved in targeting the sodium channels to the nodes of Ranvier. Intramolecular disulfide bonds favor the voltage-gated sodium channel oligomeric complex assembly. In terms of processing, N-glycosylated. In terms of tissue distribution, expressed broadly in neurons in the central and peripheral nervous systems, but not in glia and most non-neuronal cells. Weak detection in lung and adrenal gland.

The protein resides in the cell membrane. Regulatory subunit of multiple voltage-gated sodium (Nav) channels directly mediating the depolarization of excitable membranes. Navs, also called VGSCs (voltage-gated sodium channels) or VDSCs (voltage-dependent sodium channels), operate by switching between closed and open conformations depending on the voltage difference across the membrane. In the open conformation they allow Na(+) ions to selectively pass through the pore, along their electrochemical gradient. The influx of Na+ ions provokes membrane depolarization, initiating the propagation of electrical signals throughout cells and tissues. The accessory beta subunits participate in localization and functional modulation of the Nav channels. Voltage-gated sodium channels regulatory subunit that modulates channel gating kinetics. Modulates the activity of SCN2A/Nav1.2, causing a hyperpolarizing shift in the voltage-dependence of inactivation and increasing the fraction of channels operating in the fast gating mode. Also able to induce unique persistent SCN2A/Nav1.2-mediated sodium currents. Could modulate the activity of SCN10A/Nav1.8. This is Sodium channel regulatory subunit beta-3 from Rattus norvegicus (Rat).